The following is a 202-amino-acid chain: MAKQIFYTLFLFLLSTAILTASSSAPRAAITSKRAINFIQASCKATTYPTVCVNSLTGYANSIQTSPRRLAETALNVTVTQAQSTKVFVWRLGRFTSLKKREIQAVKDCIEEIHDAVDRLTMSIHEVKMCGSAKGRDQFWFHMSNAQTWTSAALTNANTCSDGFAGRVMDGRVKNSVRARILNLGRGTSNALALINAFAKKY.

The first 21 residues, 1 to 21 (MAKQIFYTLFLFLLSTAILTA), serve as a signal peptide directing secretion. Residues Cys43 and Cys52 are joined by a disulfide bond. N-linked (GlcNAc...) asparagine glycosylation is present at Asn76. A disulfide bridge connects residues Cys109 and Cys160.

Belongs to the PMEI family.

The protein localises to the secreted. It is found in the extracellular space. Its subcellular location is the apoplast. Its function is as follows. Pectin methylesterase (PME) inhibitor involved in the maintenance of cell wall integrity in response to necrotrophic pathogens. Modulates PME activity and pectin methylesterification during infection by Botrytis cinerea and contributes to resistance against the pathogen. This chain is Pectinesterase inhibitor 11, found in Arabidopsis thaliana (Mouse-ear cress).